The chain runs to 352 residues: Holliday junction branch migration complex subunit RuvB (352 aa).

The segment at 1-42 is disordered; that stretch reads MAIVSSSAGRADSQPPAAKSRVVDASPLPEEASPAREDGLRP. Positions 13-201 are large ATPase domain (RuvB-L); that stretch reads SQPPAAKSRV…FGLIQRLEFY (189 aa). Residues 33–42 are compositionally biased toward basic and acidic residues; that stretch reads SPAREDGLRP. ATP-binding residues include leucine 40, arginine 41, glycine 82, lysine 85, threonine 86, threonine 87, arginine 191, tyrosine 201, and arginine 238. Threonine 86 is a binding site for Mg(2+). Positions 202–273 are small ATPAse domain (RuvB-S); sequence GLEDLQAIVE…LVDEALTLHR (72 aa). A head domain (RuvB-H) region spans residues 276-352; it reads ARGLDASDRR…RRHLGWPELP (77 aa). Positions 331 and 336 each coordinate DNA.

It belongs to the RuvB family. As to quaternary structure, homohexamer. Forms an RuvA(8)-RuvB(12)-Holliday junction (HJ) complex. HJ DNA is sandwiched between 2 RuvA tetramers; dsDNA enters through RuvA and exits via RuvB. An RuvB hexamer assembles on each DNA strand where it exits the tetramer. Each RuvB hexamer is contacted by two RuvA subunits (via domain III) on 2 adjacent RuvB subunits; this complex drives branch migration. In the full resolvosome a probable DNA-RuvA(4)-RuvB(12)-RuvC(2) complex forms which resolves the HJ.

The protein resides in the cytoplasm. The enzyme catalyses ATP + H2O = ADP + phosphate + H(+). In terms of biological role, the RuvA-RuvB-RuvC complex processes Holliday junction (HJ) DNA during genetic recombination and DNA repair, while the RuvA-RuvB complex plays an important role in the rescue of blocked DNA replication forks via replication fork reversal (RFR). RuvA specifically binds to HJ cruciform DNA, conferring on it an open structure. The RuvB hexamer acts as an ATP-dependent pump, pulling dsDNA into and through the RuvAB complex. RuvB forms 2 homohexamers on either side of HJ DNA bound by 1 or 2 RuvA tetramers; 4 subunits per hexamer contact DNA at a time. Coordinated motions by a converter formed by DNA-disengaged RuvB subunits stimulates ATP hydrolysis and nucleotide exchange. Immobilization of the converter enables RuvB to convert the ATP-contained energy into a lever motion, pulling 2 nucleotides of DNA out of the RuvA tetramer per ATP hydrolyzed, thus driving DNA branch migration. The RuvB motors rotate together with the DNA substrate, which together with the progressing nucleotide cycle form the mechanistic basis for DNA recombination by continuous HJ branch migration. Branch migration allows RuvC to scan DNA until it finds its consensus sequence, where it cleaves and resolves cruciform DNA. The chain is Holliday junction branch migration complex subunit RuvB from Prochlorococcus marinus (strain MIT 9303).